We begin with the raw amino-acid sequence, 290 residues long: Bifunctional protein FolD (290 aa).

NADP(+) contacts are provided by residues 165–167 (GRG), Ser194, and Ile235.

The protein belongs to the tetrahydrofolate dehydrogenase/cyclohydrolase family. In terms of assembly, homodimer.

The catalysed reaction is (6R)-5,10-methylene-5,6,7,8-tetrahydrofolate + NADP(+) = (6R)-5,10-methenyltetrahydrofolate + NADPH. The enzyme catalyses (6R)-5,10-methenyltetrahydrofolate + H2O = (6R)-10-formyltetrahydrofolate + H(+). Its pathway is one-carbon metabolism; tetrahydrofolate interconversion. In terms of biological role, catalyzes the oxidation of 5,10-methylenetetrahydrofolate to 5,10-methenyltetrahydrofolate and then the hydrolysis of 5,10-methenyltetrahydrofolate to 10-formyltetrahydrofolate. This is Bifunctional protein FolD from Syntrophotalea carbinolica (strain DSM 2380 / NBRC 103641 / GraBd1) (Pelobacter carbinolicus).